A 718-amino-acid polypeptide reads, in one-letter code: MPDLLLELRSEEIPARMQRKAAGDLKKMLTDGLVEAGLTYEAAREYWTPRRLTLDIRGLTARSKDIREEIKGPSTTAPEQAVQGFLRKAGLSSVADAHVHSDPKKGDFYVAHISKPGRAAEEIIAQLVPGIIRNFPWPKSMRWGPASAKPGSLRWVRPLQSVLCTFGPETEEPVVVDFEIDGIRSGNITYGHRFLAPGEITVRRFDDYVSKLEAAKVVLDADRRKEIILADARNLAFANGLDLVEDEGLLEEVSGLVEWPVVLMGEFEEAFLAIPAEVIRLTIRANQKCFVTRPQGEGEALSNRFILTSNIEARDGGKEIAHGNGKVVRARLSDALYFWTTDQGDLPDLGQLEASAEKFGLDLNKPLDQRMARLDHLNVTFHAKLGTQGERVERIRRLAEELAPTVGADPVLAARAAVLAKADLQTEVVGEFPELQGAMGRKYALLQGEHPSVAAAIEEHYKPQGPSDYVPSDPVSVAVALADKLDTLVGFWAIDEKPTGSKDPYALRRAALGVVRILVEDRIQLRLSSIFASAGACYAGSGADQTRDLLAFFHDRLKVYLRDQGARHDLIDAVITPQSDDLLQIVRRVEALGSFLDTEDGKNLLAGTKRAANILAAEEKKKTAVAKTVEPALFKENAEKSLFAAVNQAEKQAGEAIQNEDFSAAMLALSALREPVDSFFEGVLVNDEDLEVRANRLALLTRIRAATGQVADFSKIAG.

Belongs to the class-II aminoacyl-tRNA synthetase family. As to quaternary structure, tetramer of two alpha and two beta subunits.

It is found in the cytoplasm. The catalysed reaction is tRNA(Gly) + glycine + ATP = glycyl-tRNA(Gly) + AMP + diphosphate. This is Glycine--tRNA ligase beta subunit from Mesorhizobium japonicum (strain LMG 29417 / CECT 9101 / MAFF 303099) (Mesorhizobium loti (strain MAFF 303099)).